The sequence spans 87 residues: Large ribosomal subunit protein bL31B (87 aa).

Belongs to the bacterial ribosomal protein bL31 family. Type B subfamily. In terms of assembly, part of the 50S ribosomal subunit.

The chain is Large ribosomal subunit protein bL31B from Latilactobacillus sakei subsp. sakei (strain 23K) (Lactobacillus sakei subsp. sakei).